The sequence spans 315 residues: Methionyl-tRNA formyltransferase (315 aa).

113-116 (SLLP) is a binding site for (6S)-5,6,7,8-tetrahydrofolate.

Belongs to the Fmt family.

It carries out the reaction L-methionyl-tRNA(fMet) + (6R)-10-formyltetrahydrofolate = N-formyl-L-methionyl-tRNA(fMet) + (6S)-5,6,7,8-tetrahydrofolate + H(+). Its function is as follows. Attaches a formyl group to the free amino group of methionyl-tRNA(fMet). The formyl group appears to play a dual role in the initiator identity of N-formylmethionyl-tRNA by promoting its recognition by IF2 and preventing the misappropriation of this tRNA by the elongation apparatus. The chain is Methionyl-tRNA formyltransferase from Edwardsiella ictaluri (strain 93-146).